We begin with the raw amino-acid sequence, 299 residues long: GTPase Era (299 aa).

The Era-type G domain occupies 5 to 175 (RSGFVCLVGR…IDVLAAALPP (171 aa)). The segment at 13–20 (GRPNTGKS) is G1. GTP is bound at residue 13–20 (GRPNTGKS). The tract at residues 39-43 (QTTRH) is G2. Positions 60–63 (DTPG) are G3. Residues 60–64 (DTPGL) and 124–127 (TKID) each bind GTP. The tract at residues 124 to 127 (TKID) is G4. The segment at 154–156 (VSA) is G5. A KH type-2 domain is found at 206 to 285 (VRDELPHSLA…YLDLRVKVAK (80 aa)).

It belongs to the TRAFAC class TrmE-Era-EngA-EngB-Septin-like GTPase superfamily. Era GTPase family. Monomer.

It is found in the cell envelope. It localises to the secreted. The protein resides in the cell wall. Functionally, exhibits GTPase activity. Binds RNA but is probably not involved in ribosome assembly in mycobacteria. The sequence is that of GTPase Era from Mycobacterium avium (strain 104).